Here is a 233-residue protein sequence, read N- to C-terminus: Ribosomal RNA large subunit methyltransferase E (233 aa).

S-adenosyl-L-methionine is bound by residues G80, W82, D108, D124, and D148. The Proton acceptor role is filled by K188.

Belongs to the class I-like SAM-binding methyltransferase superfamily. RNA methyltransferase RlmE family.

Its subcellular location is the cytoplasm. The catalysed reaction is uridine(2552) in 23S rRNA + S-adenosyl-L-methionine = 2'-O-methyluridine(2552) in 23S rRNA + S-adenosyl-L-homocysteine + H(+). In terms of biological role, specifically methylates the uridine in position 2552 of 23S rRNA at the 2'-O position of the ribose in the fully assembled 50S ribosomal subunit. The sequence is that of Ribosomal RNA large subunit methyltransferase E from Ruegeria pomeroyi (strain ATCC 700808 / DSM 15171 / DSS-3) (Silicibacter pomeroyi).